Here is a 213-residue protein sequence, read N- to C-terminus: Na(+)-translocating NADH-quinone reductase subunit D (213 aa).

Helical transmembrane passes span 14-34, 42-62, 77-97, 101-121, 131-151, 154-174, and 183-203; these read ALWINNQPLVAILGICSALAV, LTMGLAVSFVTGFASFVVSLL, IIISLFVILIDQFLKAFFFNI, LSVFVGLIITNCIVMGRAESM, FLDGLGSGLGYGWVLVCISII, LFGFGTILGFHIIPKIFYASA, and LGLMVLAPSAFFLLGIMVWLV.

It belongs to the NqrDE/RnfAE family. Composed of six subunits; NqrA, NqrB, NqrC, NqrD, NqrE and NqrF.

The protein resides in the cell inner membrane. The catalysed reaction is a ubiquinone + n Na(+)(in) + NADH + H(+) = a ubiquinol + n Na(+)(out) + NAD(+). In terms of biological role, NQR complex catalyzes the reduction of ubiquinone-1 to ubiquinol by two successive reactions, coupled with the transport of Na(+) ions from the cytoplasm to the periplasm. NqrA to NqrE are probably involved in the second step, the conversion of ubisemiquinone to ubiquinol. The sequence is that of Na(+)-translocating NADH-quinone reductase subunit D from Chlamydia muridarum (strain MoPn / Nigg).